A 267-amino-acid chain; its full sequence is Translation initiation factor 2 subunit alpha (267 aa).

The S1 motif domain maps to 17–88; it reads GEIVIGTVKR…KRGHIDLSIK (72 aa).

It belongs to the eIF-2-alpha family. As to quaternary structure, heterotrimer composed of an alpha, a beta and a gamma chain.

EIF-2 functions in the early steps of protein synthesis by forming a ternary complex with GTP and initiator tRNA. The protein is Translation initiation factor 2 subunit alpha (eif2a) of Archaeoglobus fulgidus (strain ATCC 49558 / DSM 4304 / JCM 9628 / NBRC 100126 / VC-16).